We begin with the raw amino-acid sequence, 297 residues long: Adrenocorticotropic hormone receptor (297 aa).

Residues 1 to 23 (MKHIINSYENINNTARNNSDCPR) are Extracellular-facing. 2 N-linked (GlcNAc...) asparagine glycosylation sites follow: Asn-12 and Asn-17. 2 disulfide bridges follow: Cys-21–Cys-253 and Cys-245–Cys-251. A helical membrane pass occupies residues 24-49 (VVLPEEIFFTISIVGVLENLIVLLAV). Topologically, residues 50–58 (FKNKNLQAP) are cytoplasmic. Residues 59-79 (MYFFICSLAISDMLGSLYKIL) traverse the membrane as a helical segment. Over 80-104 (ENILIILRNMGYLKPRGSFETTADD) the chain is Extracellular. The chain crosses the membrane as a helical span at residues 105–126 (IIDSLFVLSLLGSIFSLSVIAA). Topologically, residues 127-147 (DRYITIFHALRYHSIVTMRRT) are cytoplasmic. The helical transmembrane segment at 148 to 168 (VVVLTVIWTFCTGTGITMVIF) threads the bilayer. At 169 to 180 (SHHVPTVITFTS) the chain is on the extracellular side. Residues 181-199 (LFPLMLVFILCLYVHMFLL) traverse the membrane as a helical segment. At 200-217 (ARSHTRKISTLPRANMKG) the chain is on the cytoplasmic side. The chain crosses the membrane as a helical span at residues 218–244 (AITLTILLGVFIFCWAPFVLHVLLMTF). Over 245-256 (CPSNPYCACYMS) the chain is Extracellular. A helical membrane pass occupies residues 257–278 (LFQVNGMLIMCNAVIDPFIYAF). Residues 279-297 (RSPELRDAFKKMIFCSRYW) lie on the Cytoplasmic side of the membrane. Cys-293 carries S-palmitoyl cysteine lipidation.

This sequence belongs to the G-protein coupled receptor 1 family. Homodimer. Interacts with corticotropin (ACTH). Interacts with MRAP; this interaction targets MC2R to the plasma membrane. Interacts with MRAP2; competing with MRAP for binding to MC2R and impairing the binding of corticotropin (ACTH). In terms of processing, ubiquitinated by MGRN1 that may be involved in post-endocytic trafficking and/or degradation of internalized receptor. Melanocytes and corticoadrenal tissue.

The protein resides in the cell membrane. Hormone receptor primarily expressed in adrenal cortex that plays a key role in regulating adrenocortical function. Upon corticotropin (ACTH) binding, facilitates the release of adrenal glucocorticoids, including cortisol and corticosterone. In addition, MC2R is required for fetal and neonatal adrenal gland development. Mechanistically, activates adenylate cyclase (cAMP), the MAPK cascade as well as the cAMP-dependent protein kinase A pathway leading to steroidogenic factor 1/NR5A1-mediated transcriptional activation. This is Adrenocorticotropic hormone receptor (MC2R) from Homo sapiens (Human).